A 49-amino-acid polypeptide reads, in one-letter code: Omega-segestritoxin-Sf1a (49 aa).

4 cysteine pairs are disulfide-bonded: Cys-3–Cys-22, Cys-10–Cys-27, Cys-21–Cys-48, and Cys-29–Cys-46.

As to expression, expressed by the venom gland.

The protein resides in the secreted. Functionally, potent and selective blocker of N-type voltage-gated calcium channels (Cav2.2/CACNA1B). Also blocks vertebrate Cav2.1/CACNA1A (P/Q-type) and Cav1.2/CACNA1C (L-type) channels at very high concentration (2 micromolar). The protein is Omega-segestritoxin-Sf1a of Segestria florentina (Tube-web spider).